A 276-amino-acid polypeptide reads, in one-letter code: MIKPKIALTIAGTDPTGGAGVMADLKSFHSCGVYGMGVVTSIVAQNTLGVQHIHNLNHQWVDEQLDSVFNDTLPHAIKTGMIATADTMETIRHYLMQHESIPYVIDPVMLAKSGDSLMDNDTKQNLQHTLLPLADVVTPNLPEAEEITGLTIDSEEKIMQAGRIFINEIGSKGIIIKGGHSNDTDIAKDYLFTNEGVQTFENERFKTKHTHGTGCTFSAVITAELAKGRPLFEAVHKAKKFISMSIQYTPEIGRGRGPVNHFAYLKKEGLDDELSK.

Q45 is a binding site for 4-amino-5-hydroxymethyl-2-methylpyrimidine.

This sequence belongs to the ThiD family.

It carries out the reaction 4-amino-5-hydroxymethyl-2-methylpyrimidine + ATP = 4-amino-2-methyl-5-(phosphooxymethyl)pyrimidine + ADP + H(+). It catalyses the reaction 4-amino-2-methyl-5-(phosphooxymethyl)pyrimidine + ATP = 4-amino-2-methyl-5-(diphosphooxymethyl)pyrimidine + ADP. It functions in the pathway cofactor biosynthesis; thiamine diphosphate biosynthesis; 4-amino-2-methyl-5-diphosphomethylpyrimidine from 5-amino-1-(5-phospho-D-ribosyl)imidazole: step 2/3. It participates in cofactor biosynthesis; thiamine diphosphate biosynthesis; 4-amino-2-methyl-5-diphosphomethylpyrimidine from 5-amino-1-(5-phospho-D-ribosyl)imidazole: step 3/3. Functionally, catalyzes the phosphorylation of hydroxymethylpyrimidine phosphate (HMP-P) to HMP-PP, and of HMP to HMP-P. This is Hydroxymethylpyrimidine/phosphomethylpyrimidine kinase (thiD) from Staphylococcus aureus (strain Mu50 / ATCC 700699).